Reading from the N-terminus, the 565-residue chain is NAD-dependent malic enzyme (565 aa).

Catalysis depends on Y104, which acts as the Proton donor. R157 is a binding site for NAD(+). K175 acts as the Proton acceptor in catalysis. Residues E246, D247, and D270 each contribute to the a divalent metal cation site. Residues D270 and N418 each contribute to the NAD(+) site.

It belongs to the malic enzymes family. As to quaternary structure, homotetramer. Mg(2+) is required as a cofactor. The cofactor is Mn(2+).

The catalysed reaction is (S)-malate + NAD(+) = pyruvate + CO2 + NADH. The enzyme catalyses oxaloacetate + H(+) = pyruvate + CO2. The polypeptide is NAD-dependent malic enzyme (Edwardsiella ictaluri (strain 93-146)).